Consider the following 459-residue polypeptide: tRNA modification GTPase MnmE (459 aa).

3 residues coordinate (6S)-5-formyl-5,6,7,8-tetrahydrofolate: arginine 23, glutamate 86, and arginine 125. Positions 221-380 constitute a TrmE-type G domain; that stretch reads GLKTVIVGKP…LQDKIESMVY (160 aa). Asparagine 231 serves as a coordination point for K(+). GTP is bound by residues 231–236, 250–256, and 275–278; these read NVGKSS, TDIPGTT, and DTAG. Serine 235 contributes to the Mg(2+) binding site. Positions 250, 252, and 255 each coordinate K(+). Threonine 256 provides a ligand contact to Mg(2+). Position 459 (lysine 459) interacts with (6S)-5-formyl-5,6,7,8-tetrahydrofolate.

The protein belongs to the TRAFAC class TrmE-Era-EngA-EngB-Septin-like GTPase superfamily. TrmE GTPase family. As to quaternary structure, homodimer. Heterotetramer of two MnmE and two MnmG subunits. K(+) serves as cofactor.

The protein localises to the cytoplasm. In terms of biological role, exhibits a very high intrinsic GTPase hydrolysis rate. Involved in the addition of a carboxymethylaminomethyl (cmnm) group at the wobble position (U34) of certain tRNAs, forming tRNA-cmnm(5)s(2)U34. The chain is tRNA modification GTPase MnmE from Clostridioides difficile (strain 630) (Peptoclostridium difficile).